Reading from the N-terminus, the 1342-residue chain is Zinc finger protein 335 (1342 aa).

2 disordered regions span residues 1 to 102 and 201 to 228; these read MEEN…VTGG and TSTS…AEEP. Residues 34 to 49 are compositionally biased toward low complexity; it reads AVSADSSDAAAAPGQA. The span at 201-217 shows a compositional bias: polar residues; the sequence is TSTSTCLEAQGGPSSPV. The C2H2-type 1 zinc-finger motif lies at 245–268; that stretch reads FKCKMCQYRSSTKATLLRHMRERH. A disordered region spans residues 274–442; that stretch reads AAAAAAGKKG…TLPRRRGRPS (169 aa). The segment covering 297–327 has biased composition (acidic residues); the sequence is EEGPEEEDDDDIVDAGAIDDLEEDSDYNPAE. Residues 346–357 are compositionally biased toward basic residues; it reads RPRRRPGRPRKL. 8 consecutive C2H2-type zinc fingers follow at residues 465–487, 495–517, 523–545, 562–584, 590–612, 621–643, 649–672, and 678–701; these read FLCR…VNSH, FKCL…MFNH, YKCD…AAVH, FPCP…MKTH, HMCD…LLTH, FKCE…QLSH, FKCS…AVKH, and FACE…RCRH. Disordered stretches follow at residues 732 to 763 and 964 to 1013; these read LKQQ…QSSE and CGGL…SAAT. The segment covering 740-753 has biased composition (pro residues); the sequence is PGPPPSSPGPPEIP. Ser-976, Ser-992, and Ser-1007 each carry phosphoserine. A compositionally biased stretch (low complexity) spans 986–997; that stretch reads SQSSASSPPATS. 4 consecutive C2H2-type zinc fingers follow at residues 1019–1041, 1047–1069, 1075–1097, and 1103–1126; these read FSCK…KRAH, FKCP…MAQH, HQCS…MLTH, and FACH…QRLH. Lys-1022 is covalently cross-linked (Glycyl lysine isopeptide (Lys-Gly) (interchain with G-Cter in SUMO2)). Positions 1041 to 1342 are involved in the interaction with CCAR2; sequence HAGPGAFKCP…EYDVITLADD (302 aa). Ser-1153 is subject to Phosphoserine.

The protein belongs to the krueppel C2H2-type zinc-finger protein family. As to quaternary structure, interacts with NCOA6; may enhance ligand-dependent transcriptional activation by nuclear hormone receptors. Interacts with CNOT6. Interacts with CNOT9; the interaction is direct. Component of a nuclear receptor-mediated transcription complex composed of at least ZNF335, CCAR2 and EMSY; the complex stimulates the transcription of nuclear receptor target genes such as SOX9 and HOXA1. Within the complex interacts with EMSY and interacts (via C-terminus) with CCAR2. Interacts with members of histone H3'Lys4'(H3K4) methyltransferase complexes ASH2L, CXXC1, KMT2A/MLL1, RBBP5, SETD1A and WDR5. Component of a histone methylation complex composed of at least ZNF335, RBBP5, ASH2L and WDR5; the complex may have histone H3-specific methyltransferase activity, however does not have specificity for 'Lys-4' of histone H3. Interacts with RBBP5 and WDR5. Interacts with ASHL2. Components of this complex may associate with components of the ZNF335-CCAR2-EMSY nuclear receptor-mediated transcription complex to form a complex at least composed of ZNF335, HCFC1, CCAR2, EMSY, MKI67, RBBP5, ASH2L and WDR5. Within this complex also interacts with HCFC1 and MKI67. Ubiquitously expressed.

It localises to the nucleus. Component or associated component of some histone methyltransferase complexes may regulate transcription through recruitment of those complexes on gene promoters. Enhances ligand-dependent transcriptional activation by nuclear hormone receptors. Plays an important role in neural progenitor cell proliferation and self-renewal through the regulation of specific genes involved brain development, including REST. Also controls the expression of genes involved in somatic development and regulates, for instance, lymphoblast proliferation. The sequence is that of Zinc finger protein 335 (ZNF335) from Homo sapiens (Human).